We begin with the raw amino-acid sequence, 96 residues long: Large ribosomal subunit protein uL23 (96 aa).

Belongs to the universal ribosomal protein uL23 family. Part of the 50S ribosomal subunit. Contacts protein L29, and trigger factor when it is bound to the ribosome.

One of the early assembly proteins it binds 23S rRNA. One of the proteins that surrounds the polypeptide exit tunnel on the outside of the ribosome. Forms the main docking site for trigger factor binding to the ribosome. The chain is Large ribosomal subunit protein uL23 from Desulfovibrio desulfuricans (strain ATCC 27774 / DSM 6949 / MB).